The sequence spans 403 residues: Phosphopentomutase (403 aa).

6 residues coordinate Mn(2+): Asp-13, Asp-298, His-303, Asp-339, His-340, and His-351.

Belongs to the phosphopentomutase family. It depends on Mn(2+) as a cofactor.

The protein localises to the cytoplasm. The enzyme catalyses 2-deoxy-alpha-D-ribose 1-phosphate = 2-deoxy-D-ribose 5-phosphate. It carries out the reaction alpha-D-ribose 1-phosphate = D-ribose 5-phosphate. It participates in carbohydrate degradation; 2-deoxy-D-ribose 1-phosphate degradation; D-glyceraldehyde 3-phosphate and acetaldehyde from 2-deoxy-alpha-D-ribose 1-phosphate: step 1/2. Isomerase that catalyzes the conversion of deoxy-ribose 1-phosphate (dRib-1-P) and ribose 1-phosphate (Rib-1-P) to deoxy-ribose 5-phosphate (dRib-5-P) and ribose 5-phosphate (Rib-5-P), respectively. This Streptococcus mutans serotype c (strain ATCC 700610 / UA159) protein is Phosphopentomutase.